The chain runs to 124 residues: Phosphoribosyl-ATP pyrophosphatase (124 aa).

It belongs to the PRA-PH family.

It is found in the cytoplasm. The catalysed reaction is 1-(5-phospho-beta-D-ribosyl)-ATP + H2O = 1-(5-phospho-beta-D-ribosyl)-5'-AMP + diphosphate + H(+). It functions in the pathway amino-acid biosynthesis; L-histidine biosynthesis; L-histidine from 5-phospho-alpha-D-ribose 1-diphosphate: step 2/9. In Ralstonia nicotianae (strain ATCC BAA-1114 / GMI1000) (Ralstonia solanacearum), this protein is Phosphoribosyl-ATP pyrophosphatase (hisE).